A 329-amino-acid polypeptide reads, in one-letter code: uncharacterized protein (329 aa).

Positions 284 to 303 (SGGGHSEAGGLNAPYDKSKS) are disordered.

This is an uncharacterized protein from Methanocaldococcus jannaschii (strain ATCC 43067 / DSM 2661 / JAL-1 / JCM 10045 / NBRC 100440) (Methanococcus jannaschii).